Consider the following 193-residue polypeptide: Xanthine phosphoribosyltransferase (193 aa).

Leu20 and Thr27 together coordinate xanthine. 128 to 132 is a 5-phospho-alpha-D-ribose 1-diphosphate binding site; it reads ANGQA. Lys156 is a xanthine binding site.

This sequence belongs to the purine/pyrimidine phosphoribosyltransferase family. Xpt subfamily. Homodimer.

Its subcellular location is the cytoplasm. It catalyses the reaction XMP + diphosphate = xanthine + 5-phospho-alpha-D-ribose 1-diphosphate. Its pathway is purine metabolism; XMP biosynthesis via salvage pathway; XMP from xanthine: step 1/1. Functionally, converts the preformed base xanthine, a product of nucleic acid breakdown, to xanthosine 5'-monophosphate (XMP), so it can be reused for RNA or DNA synthesis. This Streptococcus equi subsp. equi (strain 4047) protein is Xanthine phosphoribosyltransferase.